A 496-amino-acid polypeptide reads, in one-letter code: Fatty acyl-CoA reductase 8 (496 aa).

It belongs to the fatty acyl-CoA reductase family.

It carries out the reaction a long-chain fatty acyl-CoA + 2 NADPH + 2 H(+) = a long-chain primary fatty alcohol + 2 NADP(+) + CoA. Its function is as follows. Catalyzes the reduction of fatty acyl-CoA to fatty alcohols. Catalyzes specifically the formation of C16:0 fatty alcohol. This is Fatty acyl-CoA reductase 8 (FAR8) from Arabidopsis thaliana (Mouse-ear cress).